The sequence spans 874 residues: Alanine--tRNA ligase (874 aa).

Histidine 564, histidine 568, cysteine 665, and histidine 669 together coordinate Zn(2+).

This sequence belongs to the class-II aminoacyl-tRNA synthetase family. The cofactor is Zn(2+).

It is found in the cytoplasm. It carries out the reaction tRNA(Ala) + L-alanine + ATP = L-alanyl-tRNA(Ala) + AMP + diphosphate. In terms of biological role, catalyzes the attachment of alanine to tRNA(Ala) in a two-step reaction: alanine is first activated by ATP to form Ala-AMP and then transferred to the acceptor end of tRNA(Ala). Also edits incorrectly charged Ser-tRNA(Ala) and Gly-tRNA(Ala) via its editing domain. In Burkholderia pseudomallei (strain 1106a), this protein is Alanine--tRNA ligase.